We begin with the raw amino-acid sequence, 162 residues long: MREYQRLKGFTDNLELRRRNRATVEHYMRMKGAERLQRHSLFVEDGCAGNWTTESGEPLVFRGHESLRRLAEWLERCFPDWEWHNVRIFETEDPNHFWVECDGRGKALVPGYPQGYCENHYIHSFELENGRIKRNREFMNPMQKLRALGIAVPQIKRDGIPT.

Belongs to the PhzA/PhzB family.

The protein operates within antibiotic biosynthesis; phenazine biosynthesis. In terms of biological role, involved in the biosynthesis of the antibiotic phenazine, a nitrogen-containing heterocyclic molecule having important roles in virulence, competition and biological control. PhzA2 (operon phzA2B2C2E2F2G2) has a role in the biosynthesis of the phenazine during both planktonic growth and biofilm development, and in host infection during biofilm development. The chain is Phenazine biosynthesis protein PhzA2 from Pseudomonas aeruginosa (strain ATCC 15692 / DSM 22644 / CIP 104116 / JCM 14847 / LMG 12228 / 1C / PRS 101 / PAO1).